Here is a 117-residue protein sequence, read N- to C-terminus: Photosystem II reaction center Psb28 protein (117 aa).

This sequence belongs to the Psb28 family. As to quaternary structure, part of the photosystem II complex.

Its subcellular location is the cellular thylakoid membrane. In Prochlorococcus marinus subsp. pastoris (strain CCMP1986 / NIES-2087 / MED4), this protein is Photosystem II reaction center Psb28 protein.